A 101-amino-acid polypeptide reads, in one-letter code: Chaperone modulatory protein CbpM (101 aa).

It belongs to the CbpM family.

Interacts with CbpA and inhibits both the DnaJ-like co-chaperone activity and the DNA binding activity of CbpA. Together with CbpA, modulates the activity of the DnaK chaperone system. Does not inhibit the co-chaperone activity of DnaJ. The chain is Chaperone modulatory protein CbpM from Pseudomonas putida (strain ATCC 700007 / DSM 6899 / JCM 31910 / BCRC 17059 / LMG 24140 / F1).